The following is a 96-amino-acid chain: CLAVATA3/ESR (CLE)-related protein 43 (96 aa).

An N-terminal signal peptide occupies residues 1–28 (MGCRDILLTFSVALLLISLFQIWLFREG). Residues 71–96 (FGLNNTNSRFEDSNRRIPSSPDRLHN) form a disordered region. The N-linked (GlcNAc...) asparagine glycan is linked to Asn-74. Hydroxyproline is present on residues Pro-88 and Pro-91. Residue Pro-91 is glycosylated (O-linked (Ara...) hydroxyproline).

Belongs to the CLV3/ESR signal peptide family. In terms of processing, the O-glycosylation (arabinosylation) of the hydroxyproline Pro-91 enhances binding affinity of the CLE43p peptide for its receptor. Expressed at low levels in seedlings.

It localises to the secreted. The protein resides in the extracellular space. Extracellular signal peptide that regulates cell fate. Promotes pollen tube growth prolongation in a SKM1 and SKM2-dependent manner, especially under relatively high temperature (at 30 degrees Celsius), thus conferring tolerance against high temperature probably through the maintenance of mitochondrial activity. The protein is CLAVATA3/ESR (CLE)-related protein 43 of Arabidopsis thaliana (Mouse-ear cress).